The primary structure comprises 448 residues: Probable ribonuclease FAU-1 (448 aa).

The interval 426–448 (EAPGGKICTSEGLTSALPQSSSA) is disordered. The span at 436–448 (EGLTSALPQSSSA) shows a compositional bias: polar residues.

This sequence belongs to the FAU-1 family.

Probable RNase involved in rRNA stability through maturation and/or degradation of precursor rRNAs. Binds to RNA in loop regions with AU-rich sequences. The polypeptide is Probable ribonuclease FAU-1 (Pyrobaculum islandicum (strain DSM 4184 / JCM 9189 / GEO3)).